A 421-amino-acid polypeptide reads, in one-letter code: MTNLLEDLSFRGLIQQMTDEEGLNKQLNEEKIRLYSGFDPTADSLHIGHLLPILTLRRFQLAGHHPIALVGGATGLIGDPSGKKAERTLNTQDIVVEWSQKIKNQLSRFLDFEAGENPAVIANNFDWIGKLSIIEFLRDVGKNFGINYMLAKDTVSSRIETGISYTEFSYMILQSYDFLNLYREKNCKLQIGGSDQWGNITAGLELIRKSEEEGAKAFGLTIPLVTKADGTKFGKTEGGAIWLDKEKTSPYEFYQFWINTDDRDVVKYLKYFTFLSKEEIEAYAEKTETAPEKREAQKRLAEEVTVLVHGREALEQAVHISQALFSGNIKELSAQDVKVGFKDVPSFEKDRSEELSLVDVLVESKLSPSKRQAREDIQNGAVYINGERQTDIGHLLTAEDRIEDQFTVLRRGKKKYFLITY.

Residue Tyr35 coordinates L-tyrosine. The short motif at 40 to 49 (PTADSLHIGH) is the 'HIGH' region element. The L-tyrosine site is built by Tyr170 and Gln174. The 'KMSKS' region signature appears at 232–236 (KFGKT). Lys235 provides a ligand contact to ATP. Residues 355 to 421 (LSLVDVLVES…GKKKYFLITY (67 aa)) form the S4 RNA-binding domain.

Belongs to the class-I aminoacyl-tRNA synthetase family. TyrS type 1 subfamily. In terms of assembly, homodimer.

The protein localises to the cytoplasm. It carries out the reaction tRNA(Tyr) + L-tyrosine + ATP = L-tyrosyl-tRNA(Tyr) + AMP + diphosphate + H(+). Functionally, catalyzes the attachment of tyrosine to tRNA(Tyr) in a two-step reaction: tyrosine is first activated by ATP to form Tyr-AMP and then transferred to the acceptor end of tRNA(Tyr). This Bacillus velezensis (strain DSM 23117 / BGSC 10A6 / LMG 26770 / FZB42) (Bacillus amyloliquefaciens subsp. plantarum) protein is Tyrosine--tRNA ligase.